A 235-amino-acid polypeptide reads, in one-letter code: Nucleoside diphosphate kinase 4, chloroplastic (235 aa).

Lys-93, Phe-141, Arg-169, Thr-175, Arg-186, and Asn-196 together coordinate ATP. The active-site Pros-phosphohistidine intermediate is His-199.

Belongs to the NDK family. In terms of assembly, homohexamer. The cofactor is Mg(2+).

Its subcellular location is the plastid. It is found in the chloroplast thylakoid lumen. It catalyses the reaction a 2'-deoxyribonucleoside 5'-diphosphate + ATP = a 2'-deoxyribonucleoside 5'-triphosphate + ADP. The catalysed reaction is a ribonucleoside 5'-diphosphate + ATP = a ribonucleoside 5'-triphosphate + ADP. In terms of biological role, major role in the synthesis of nucleoside triphosphates other than ATP. The ATP gamma phosphate is transferred to the NDP beta phosphate via a ping-pong mechanism, using a phosphorylated active-site intermediate. Shows the highest specificity towards GDP. This is Nucleoside diphosphate kinase 4, chloroplastic (NDK4) from Spinacia oleracea (Spinach).